Reading from the N-terminus, the 149-residue chain is Transcriptional repressor NrdR (149 aa).

The segment at 3-34 is a zinc-finger region; the sequence is CPFCSEQETKVIDSRLVAEGQQVRRRRECMVC. The 91-residue stretch at 49-139 folds into the ATP-cone domain; the sequence is PRVIKRDGSR…VYRSFEDIRE (91 aa).

The protein belongs to the NrdR family. Zn(2+) serves as cofactor.

In terms of biological role, negatively regulates transcription of bacterial ribonucleotide reductase nrd genes and operons by binding to NrdR-boxes. In Alteromonas mediterranea (strain DSM 17117 / CIP 110805 / LMG 28347 / Deep ecotype), this protein is Transcriptional repressor NrdR.